Consider the following 211-residue polypeptide: Large ribosomal subunit protein uL4 (211 aa).

The disordered stretch occupies residues 40-87 (QQAHTRQGTASTLTRSEVRGGGRKPYKQKGTGRARQGSIRTPLRPGGG). Polar residues predominate over residues 41–54 (QAHTRQGTASTLTR). Residues 60–71 (GGRKPYKQKGTG) show a composition bias toward basic residues.

It belongs to the universal ribosomal protein uL4 family. Part of the 50S ribosomal subunit.

Its function is as follows. One of the primary rRNA binding proteins, this protein initially binds near the 5'-end of the 23S rRNA. It is important during the early stages of 50S assembly. It makes multiple contacts with different domains of the 23S rRNA in the assembled 50S subunit and ribosome. In terms of biological role, forms part of the polypeptide exit tunnel. The polypeptide is Large ribosomal subunit protein uL4 (Synechococcus sp. (strain WH7803)).